Reading from the N-terminus, the 342-residue chain is Phosphoribosylformylglycinamidine cyclo-ligase (342 aa).

This sequence belongs to the AIR synthase family.

It is found in the cytoplasm. The catalysed reaction is 2-formamido-N(1)-(5-O-phospho-beta-D-ribosyl)acetamidine + ATP = 5-amino-1-(5-phospho-beta-D-ribosyl)imidazole + ADP + phosphate + H(+). It functions in the pathway purine metabolism; IMP biosynthesis via de novo pathway; 5-amino-1-(5-phospho-D-ribosyl)imidazole from N(2)-formyl-N(1)-(5-phospho-D-ribosyl)glycinamide: step 2/2. The polypeptide is Phosphoribosylformylglycinamidine cyclo-ligase (Staphylococcus aureus (strain Mu3 / ATCC 700698)).